A 594-amino-acid polypeptide reads, in one-letter code: Bifunctional lycopene cyclase/phytoene synthase (594 aa).

Positions 1–249 (MGLDYLMVHV…VVFGIAAMHN (249 aa)) are lycopene beta-cyclase. 7 consecutive transmembrane segments (helical) span residues 3–23 (LDYLMVHVKYNLPPALLLTIL), 35–55 (KIVLLCTIAVVWTIPWDSYLI), 77–97 (LEEVFFFIIQTYNTSLLYIIF), 130–150 (LGTLFFTGILILGISFIYIGG), 153–173 (MYLGLILSWVSPILVMQWVLM), 176–196 (FLLALPPASVWVPIALPTLYL), and 227–247 (IEEALFFLVTNVMVVFGIAAM). Positions 256–594 (YKAFISTTAM…RFKRAWLAML (339 aa)) are phytoene synthase.

It in the N-terminal section; belongs to the lycopene beta-cyclase family. This sequence in the C-terminal section; belongs to the phytoene/squalene synthase family.

The protein localises to the membrane. It catalyses the reaction all-trans-lycopene = gamma-carotene. The catalysed reaction is gamma-carotene = all-trans-beta-carotene. The enzyme catalyses 2 (2E,6E,10E)-geranylgeranyl diphosphate = 15-cis-phytoene + 2 diphosphate. Its pathway is carotenoid biosynthesis; beta-carotene biosynthesis. It functions in the pathway carotenoid biosynthesis; phytoene biosynthesis; all-trans-phytoene from geranylgeranyl diphosphate: step 1/1. Bifunctional enzyme that catalyzes the reactions from geranylgeranyl diphosphate to phytoene (phytoene synthase) and lycopene to beta-carotene via the intermediate gamma-carotene (lycopene cyclase). The chain is Bifunctional lycopene cyclase/phytoene synthase from Arthroderma gypseum (strain ATCC MYA-4604 / CBS 118893) (Microsporum gypseum).